A 258-amino-acid polypeptide reads, in one-letter code: Uroplakin-1a (258 aa).

Residues 1–14 (MASAAAAEAEKGSP) lie on the Cytoplasmic side of the membrane. Residues 15–35 (VVVGLLVVGNIIILLSGLSLF) traverse the membrane as a helical segment. Residues 36–59 (AETIWVTADQYRVYPLMGVSGKDD) lie on the Extracellular side of the membrane. The helical transmembrane segment at 60-86 (VFAGAWIAIFCGFSFFMVASFGVGAAL) threads the bilayer. Residues 87 to 91 (CRRRS) lie on the Cytoplasmic side of the membrane. Residues 92 to 112 (MVLTYLVLMLIVYIFECASCI) form a helical membrane-spanning segment. Residues 113-230 (TSYTHRDYMV…HIGHAIDSYT (118 aa)) are Extracellular-facing. The N-linked (GlcNAc...) asparagine glycan is linked to N170. The chain crosses the membrane as a helical span at residues 231–252 (WGISWFGFAILMWTLPVMLIAM). Over 253–258 (YFYTML) the chain is Cytoplasmic.

Belongs to the tetraspanin (TM4SF) family. Homodimer; disulfide-linked. Interacts with uroplakin-2 (UPK2). As to expression, high expression restricted to ureteric urothelium (most superficial cells); low expression in prostate. Expression in normal urothelial cells is lost in culture. Some expression in tumor cell lines derived from urothelial malignancies.

The protein resides in the membrane. Its function is as follows. Component of the asymmetric unit membrane (AUM); a highly specialized biomembrane elaborated by terminally differentiated urothelial cells. May play an important role in normal bladder epithelial physiology, possibly in regulating membrane permeability of superficial umbrella cells or in stabilizing the apical membrane through AUM/cytoskeletal interactions. This Homo sapiens (Human) protein is Uroplakin-1a (UPK1A).